Consider the following 533-residue polypeptide: Subtilisin-like serine protease pepC (533 aa).

The signal sequence occupies residues 1–16 (MKGILGLSLLPLLTAA). Residues 43 to 136 (SYIVVFKKHV…IERDSEVHTM (94 aa)) enclose the Inhibitor I9 domain. Residues 145–450 (PWGLARISHR…VGIYKRNELT (306 aa)) enclose the Peptidase S8 domain. Catalysis depends on charge relay system residues Asp181 and His213. N-linked (GlcNAc...) asparagine glycosylation is present at Asn283. An intrachain disulfide couples Cys320 to Cys351. The active-site Charge relay system is Ser379. Asn435 carries an N-linked (GlcNAc...) asparagine glycan. Over residues 496-513 (KSCSPRSLVPSTARSRMP) the composition is skewed to polar residues. Residues 496 to 519 (KSCSPRSLVPSTARSRMPSSHRSE) form a disordered region.

The protein belongs to the peptidase S8 family.

The protein is Subtilisin-like serine protease pepC (pepC) of Aspergillus niger.